Reading from the N-terminus, the 94-residue chain is Scorpine-like-1 (94 aa).

Residues 1–18 form the signal peptide; sequence MNTKFTVLIFLGVIVVSY. The BetaSPN-type CS-alpha/beta domain maps to 54–94; it reads EYGCMMDISWNKDCQRHCQSTEQKDGICHGMKCKCGKPRSY. Cystine bridges form between cysteine 57–cysteine 81, cysteine 67–cysteine 86, and cysteine 71–cysteine 88.

It belongs to the long chain scorpion toxin family. Class 3 subfamily. Expressed by the venom gland.

The protein resides in the secreted. Functionally, has antibacterial activity. The sequence is that of Scorpine-like-1 from Urodacus yaschenkoi (Inland robust scorpion).